Reading from the N-terminus, the 522-residue chain is Sorting nexin-1 (522 aa).

Positions 1–142 (MASGGGGCSA…ELEEEEQEDQ (142 aa)) are disordered. Phosphoserine occurs at positions 32 and 39. Over residues 35–45 (EAGDSDTEGED) the composition is skewed to acidic residues. Phosphothreonine occurs at positions 41 and 48. Polar residues predominate over residues 55–65 (KPQSPKKTTSL). Phosphoserine is present on residues serine 58 and serine 72. Positions 71-80 (GSKENGIHEE) are enriched in basic and acidic residues. Positions 98–107 (LDSTQNNQKT) are enriched in polar residues. The segment covering 132-142 (EELEEEEQEDQ) has biased composition (acidic residues). In terms of domain architecture, PX spans 143–272 (FDLTVGITDP…EFLEKEELPR (130 aa)). 3 residues coordinate a 1,2-diacyl-sn-glycero-3-phospho-(1D-myo-inositol-3-phosphate): arginine 186, serine 188, and lysine 214. Position 188 is a phosphoserine (serine 188). Lysine 237 carries the post-translational modification N6-acetyllysine. Arginine 238 contacts a 1,2-diacyl-sn-glycero-3-phospho-(1D-myo-inositol-3-phosphate). Serine 280 carries the phosphoserine modification. The segment at 281-298 (GAGLLKMFNKATDAVSKM) is membrane-binding amphipathic helix. A BAR domain is found at 302-522 (MNESDIWFEE…AFLPEARAIS (221 aa)).

This sequence belongs to the sorting nexin family. In terms of assembly, predominantly forms heterodimers with BAR domain-containing sorting nexins SNX5, SNX6 and SNX32; can self-associate to form homodimers. The heterodimers are proposed to self-assemble into helical arrays on the membrane to stabilize and expand local membrane curvature underlying endosomal tubule formation. Thought to be a component of the originally described retromer complex (also called SNX-BAR retromer) which is a pentamer containing the heterotrimeric retromer cargo-selective complex (CSC), also described as vacuolar protein sorting subcomplex (VPS) and a heterodimeric membrane-deforming subcomplex formed between SNX1 or SNX2 and SNX5 or SNX6 (also called SNX-BAR subcomplex); the respective CSC and SNX-BAR subcomplexes associate with low affinity. Interacts with SNX5, SNX6, SNX32, VPS26A, VPS29, VPS35, DRD5, DENND5A, KALRN, RHOG (GDP-bound form). The interaction with SNX2 is reported controversially. Interacts with DNAJC13; prevented by presence of HGS. Interacts with HGS.

It is found in the endosome membrane. The protein localises to the golgi apparatus. The protein resides in the trans-Golgi network membrane. It localises to the early endosome membrane. Its subcellular location is the cell projection. It is found in the lamellipodium. Its function is as follows. Involved in several stages of intracellular trafficking. Interacts with membranes containing phosphatidylinositol 3-phosphate (PtdIns(3P)) or phosphatidylinositol 3,5-bisphosphate (PtdIns(3,5)P2). Acts in part as component of the retromer membrane-deforming SNX-BAR subcomplex. The SNX-BAR retromer mediates retrograde transport of cargo proteins from endosomes to the trans-Golgi network (TGN) and is involved in endosome-to-plasma membrane transport for cargo protein recycling. The SNX-BAR subcomplex functions to deform the donor membrane into a tubular profile called endosome-to-TGN transport carrier (ETC). Can sense membrane curvature and has in vitro vesicle-to-membrane remodeling activity. Involved in retrograde endosome-to-TGN transport of lysosomal enzyme receptors (IGF2R, M6PR and SORT1). Plays a role in targeting ligand-activated EGFR to the lysosomes for degradation after endocytosis from the cell surface and release from the Golgi. Involvement in retromer-independent endocytic trafficking of P2RY1 and lysosomal degradation of protease-activated receptor-1/F2R. Promotes KALRN- and RHOG-dependent but retromer-independent membrane remodeling such as lamellipodium formation; the function is dependent on GEF activity of KALRN. Required for endocytosis of DRD5 upon agonist stimulation but not for basal receptor trafficking. This chain is Sorting nexin-1 (Snx1), found in Rattus norvegicus (Rat).